Consider the following 342-residue polypeptide: Antihemorrhagic factor HSF (342 aa).

Positions 1-19 (MNSLVALVLLGQIIGSTLS) are cleaved as a signal peptide. Cystatin fetuin-A-type domains lie at 22-130 (VRGD…VKCH) and 141-254 (RNCS…SNCV). The short motif at 23–25 (RGD) is the Cell attachment site element. Positions 24 to 108 (GDLECDDKEA…RQQHNHAVEM (85 aa)) are indispensable for metalloproteinase inhibition. Intrachain disulfides connect Cys-28–Cys-332, Cys-85–Cys-96, Cys-110–Cys-129, Cys-143–Cys-146, Cys-205–Cys-217, and Cys-230–Cys-253. Residue Asn-142 is glycosylated (N-linked (GlcNAc...) asparagine). Asn-204 carries N-linked (GlcNAc...) asparagine glycosylation. Asn-282 carries N-linked (GlcNAc...) asparagine glycosylation.

It belongs to the fetuin family. Cys-63 may exist in a mixed disulfide form with a thiol compound such as glutathione. Expressed by the liver.

It is found in the secreted. Its function is as follows. Inhibits hemorrhagic and proteolytic activities of metalloproteinases (HR1A, HR1B, HR2a, HR2b and H2 proteinase from T.flavodidis and brevilysins H3, H4, H6 and L4 from A.halys brevicaudus). Has no effect on brevilysins H2. Has no effect on papain and cathepsin-B. The sequence is that of Antihemorrhagic factor HSF from Protobothrops flavoviridis (Habu).